A 100-amino-acid chain; its full sequence is MSRGKHKPTITTERWRFFVEGKVQGVGFRQGCCRRAMDLGLSGWVRNLPDGRVEVQAEGTPMALSELRLWCERGPADARVSQVRPSQLPITGADWFEIRS.

The Acylphosphatase-like domain maps to 14–100 (RWRFFVEGKV…TGADWFEIRS (87 aa)). Active-site residues include arginine 29 and asparagine 47.

The protein belongs to the acylphosphatase family.

The enzyme catalyses an acyl phosphate + H2O = a carboxylate + phosphate + H(+). In Synechococcus sp. (strain WH7803), this protein is Acylphosphatase (acyP).